The chain runs to 360 residues: Squamosa promoter-binding-like protein 7 (360 aa).

The span at 74-89 (AQGSGGGGGGGGGGSA) shows a compositional bias: gly residues. The segment at 74–98 (AQGSGGGGGGGGGGSADQGKRKEKA) is disordered. The SBP-type zinc-finger motif lies at 105–182 (VPRCQVEGCD…AGHNERRRRS (78 aa)). Residues cysteine 108, cysteine 113, cysteine 130, histidine 133, cysteine 149, cysteine 152, histidine 156, and cysteine 168 each coordinate Zn(2+). Residues 165 to 181 (KKSCRRRLAGHNERRRR) carry the Bipartite nuclear localization signal motif. Residues 172–182 (LAGHNERRRRS) are compositionally biased toward basic residues. Disordered regions lie at residues 172–196 (LAGH…AHPH), 261–306 (FFSD…HENQ), and 318–360 (TTAA…ARVV).

In terms of tissue distribution, expressed in young panicles.

The protein localises to the nucleus. Functionally, trans-acting factor that binds specifically to the consensus nucleotide sequence 5'-TNCGTACAA-3'. May be involved in panicle development. The sequence is that of Squamosa promoter-binding-like protein 7 (SPL7) from Oryza sativa subsp. japonica (Rice).